Consider the following 799-residue polypeptide: Ribosome biogenesis protein BOP1 homolog (799 aa).

A disordered region spans residues 1 to 171; it reads MPRRVRAQKR…DDTSDEEHSL (171 aa). Residues 58-69 are compositionally biased toward acidic residues; it reads SESDVTDDEQID. Residues 70–81 are compositionally biased toward basic and acidic residues; the sequence is EEARQADRDLLK. Residues 93–121 show a composition bias toward acidic residues; it reads DPSDADNDDDDDEEEAASDDDDEEEDAEP. The span at 122–132 shows a compositional bias: low complexity; the sequence is SSDSSNEASDA. WD repeat units follow at residues 457-498, 500-538, 584-626, 629-669, 670-709, 713-752, and 769-799; these read GHKA…RVVT, DAEVNMVAWCPNAGVSIVAVAHGHTVSLICPRVATAAID, PHHA…TQHP, KRNR…KKLL, TGVRWLSSLAIHPAGDNLIIGSYDKRLCWFDMDLSIKPYK, YHKYALRQVCFHKKYPIFASCGDDGNVHVLHGMVYNDLGQ, and SDGMGVMDCTFHPSQPWLFSAGSDGSIKLHV.

This sequence belongs to the WD repeat BOP1/ERB1 family.

The protein localises to the nucleus. The protein resides in the nucleolus. It localises to the nucleoplasm. Its function is as follows. Required for maturation of ribosomal RNAs and formation of the large ribosomal subunit. The sequence is that of Ribosome biogenesis protein BOP1 homolog from Monosiga brevicollis (Choanoflagellate).